The sequence spans 266 residues: Cytochrome c oxidase subunit 2 (266 aa).

Residues 1–43 are Mitochondrial intermembrane-facing; it reads MTITNYINNQFTFLDMAEPWQLGFQDPATPVMEGIINFHHDLM. The helical transmembrane segment at 44-64 threads the bilayer; it reads FFLISIVVFVCWMLFRVITLF. At 65 to 82 the chain is on the mitochondrial matrix side; that stretch reads DEKKNKIPATVVHGATIE. The chain crosses the membrane as a helical span at residues 83–103; that stretch reads IIWTSIPALILLTVAVPSFAL. Topologically, residues 104 to 266 are mitochondrial intermembrane; it reads LYSMDEVIDP…NVXLIKFYGI (163 aa). The Cu cation site is built by histidine 186, cysteine 221, glutamate 223, cysteine 225, histidine 229, and methionine 232. Glutamate 223 serves as a coordination point for Mg(2+).

This sequence belongs to the cytochrome c oxidase subunit 2 family. In terms of assembly, component of the cytochrome c oxidase (complex IV, CIV), a multisubunit enzyme composed of a catalytic core of 3 subunits and several supernumerary subunits. The complex exists as a monomer or a dimer and forms supercomplexes (SCs) in the inner mitochondrial membrane with ubiquinol-cytochrome c oxidoreductase (cytochrome b-c1 complex, complex III, CIII). It depends on Cu cation as a cofactor.

It is found in the mitochondrion inner membrane. It catalyses the reaction 4 Fe(II)-[cytochrome c] + O2 + 8 H(+)(in) = 4 Fe(III)-[cytochrome c] + 2 H2O + 4 H(+)(out). In terms of biological role, component of the cytochrome c oxidase, the last enzyme in the mitochondrial electron transport chain which drives oxidative phosphorylation. The respiratory chain contains 3 multisubunit complexes succinate dehydrogenase (complex II, CII), ubiquinol-cytochrome c oxidoreductase (cytochrome b-c1 complex, complex III, CIII) and cytochrome c oxidase (complex IV, CIV), that cooperate to transfer electrons derived from NADH and succinate to molecular oxygen, creating an electrochemical gradient over the inner membrane that drives transmembrane transport and the ATP synthase. Cytochrome c oxidase is the component of the respiratory chain that catalyzes the reduction of oxygen to water. Electrons originating from reduced cytochrome c in the intermembrane space (IMS) are transferred via the dinuclear copper A center (CU(A)) of subunit 2 and heme A of subunit 1 to the active site in subunit 1, a binuclear center (BNC) formed by heme A3 and copper B (CU(B)). The BNC reduces molecular oxygen to 2 water molecules using 4 electrons from cytochrome c in the IMS and 4 protons from the mitochondrial matrix. The polypeptide is Cytochrome c oxidase subunit 2 (COX2) (Phytophthora megasperma (Potato pink rot fungus)).